The chain runs to 686 residues: Protein arginine N-methyltransferase 7 (686 aa).

SAM-dependent MTase PRMT-type domains lie at 5–352 and 357–686; these read SDDY…FSWW and DLSL…FKFD.

Belongs to the class I-like SAM-binding methyltransferase superfamily. Protein arginine N-methyltransferase family. PRMT7 subfamily.

In terms of biological role, essential arginine methyltransferase that can both catalyze the formation of omega-N monomethylarginine (MMA) and symmetrical dimethylarginine (sDMA). Specifically mediates the symmetrical dimethylation of arginine residues in the small nuclear ribonucleoproteins SmD1 and SmD3. The protein is Protein arginine N-methyltransferase 7 (Art7) of Aedes aegypti (Yellowfever mosquito).